A 729-amino-acid chain; its full sequence is Phosphoribosylformylglycinamidine synthase subunit PurL (729 aa).

Residue His-54 is part of the active site. The ATP site is built by Tyr-57 and Lys-96. Glu-98 lines the Mg(2+) pocket. Substrate is bound by residues 99–102 (SHNH) and Arg-121. The Proton acceptor role is filled by His-100. Asp-122 is a Mg(2+) binding site. Substrate is bound at residue Gln-245. Asp-273 serves as a coordination point for Mg(2+). 317-319 (ETQ) is a substrate binding site. ATP-binding residues include Asp-495 and Gly-532. Asn-533 provides a ligand contact to Mg(2+). Residue Ser-535 participates in substrate binding.

This sequence belongs to the FGAMS family. As to quaternary structure, monomer. Part of the FGAM synthase complex composed of 1 PurL, 1 PurQ and 2 PurS subunits.

It is found in the cytoplasm. It catalyses the reaction N(2)-formyl-N(1)-(5-phospho-beta-D-ribosyl)glycinamide + L-glutamine + ATP + H2O = 2-formamido-N(1)-(5-O-phospho-beta-D-ribosyl)acetamidine + L-glutamate + ADP + phosphate + H(+). It functions in the pathway purine metabolism; IMP biosynthesis via de novo pathway; 5-amino-1-(5-phospho-D-ribosyl)imidazole from N(2)-formyl-N(1)-(5-phospho-D-ribosyl)glycinamide: step 1/2. Part of the phosphoribosylformylglycinamidine synthase complex involved in the purines biosynthetic pathway. Catalyzes the ATP-dependent conversion of formylglycinamide ribonucleotide (FGAR) and glutamine to yield formylglycinamidine ribonucleotide (FGAM) and glutamate. The FGAM synthase complex is composed of three subunits. PurQ produces an ammonia molecule by converting glutamine to glutamate. PurL transfers the ammonia molecule to FGAR to form FGAM in an ATP-dependent manner. PurS interacts with PurQ and PurL and is thought to assist in the transfer of the ammonia molecule from PurQ to PurL. This chain is Phosphoribosylformylglycinamidine synthase subunit PurL, found in Staphylococcus epidermidis (strain ATCC 12228 / FDA PCI 1200).